A 1061-amino-acid chain; its full sequence is Transmembrane protease serine 9 (1061 aa).

Topologically, residues 3 to 31 (PAAPDLQPVPEVTKGVPVPTPDSGCCRAA) are cytoplasmic. A helical transmembrane segment spans residues 32–52 (VTTVVAISVASLTLGVLSAFL). Residues 53–1061 (SAQGVQVEHT…LGWIGQNIRE (1009 aa)) lie on the Extracellular side of the membrane. Residues 155–192 (HCPGNAFSCQNSQCVSKENPECDDRVDCSDGSDEAQCD) enclose the LDL-receptor class A domain. Intrachain disulfides connect Cys156/Cys168, Cys163/Cys182, Cys176/Cys191, and Cys230/Cys246. The Peptidase S1 1 domain maps to 205 to 438 (IVGGAEAAPG…LRDWILEVTS (234 aa)). Catalysis depends on charge relay system residues His245 and Asp294. 3 disulfides stabilise this stretch: Cys328/Cys395, Cys360/Cys374, and Cys385/Cys414. Ser389 (charge relay system) is an active-site residue. The tract at residues 443-499 (PVVPTEAPAPITPSTPWPTSPESRVPNTTAKPTVAPTPAPLHPSTAAKPQECGARPA) is disordered. A compositionally biased stretch (pro residues) spans 452-461 (PITPSTPWPT). The segment covering 462-476 (SPESRVPNTTAKPTV) has biased composition (low complexity). Residue Asn469 is glycosylated (N-linked (GlcNAc...) asparagine). Residues 506-738 (IVGGISAVSG…LKDWILKAMS (233 aa)) form the Peptidase S1 2 domain. A disulfide bridge links Cys531 with Cys547. His546 (charge relay system) is an active-site residue. N-linked (GlcNAc...) asparagine glycosylation is present at Asn549. Asp594 (charge relay system) is an active-site residue. Cystine bridges form between Cys628–Cys695, Cys660–Cys674, and Cys685–Cys714. Residues Asn640 and Asn665 are each glycosylated (N-linked (GlcNAc...) asparagine). Ser689 serves as the catalytic Charge relay system. The segment covering 740–752 (DPSSTAHPHTSST) has biased composition (low complexity). 2 disordered regions span residues 740 to 771 (DPSSTAHPHTSSTRLIPSQPPTTTAAGLIPEA) and 790 to 810 (LNTTLSARSTTTRRQTPAPGT). Asn791 carries N-linked (GlcNAc...) asparagine glycosylation. The span at 792 to 808 (TTLSARSTTTRRQTPAP) shows a compositional bias: low complexity. Positions 830–1060 (IVGGSAASLG…VLGWIGQNIR (231 aa)) constitute a Peptidase S1 3 domain. 4 disulfide bridges follow: Cys856–Cys872, Cys951–Cys1017, Cys982–Cys996, and Cys1007–Cys1036.

It belongs to the peptidase S1 family. Proteolytically cleaved to generate 3 independent serine protease chains. The cleaved chains may remain attached to the membrane thanks to disulfide bonds. It is unclear whether cleavage always takes place.

The protein localises to the cell membrane. Its activity is regulated as follows. Inhibited by serine protease inhibitors PMSF and 4-(2-aminoethyl)benzenesulfonyl fluoride, but not by EDTA. Its function is as follows. Serase-1 and serase-2 are serine proteases that hydrolyze the peptides N-t-Boc-Gln-Ala-Arg-AMC and N-t-Boc-Gln-Gly-Arg-AMC. In contrast, N-t-Boc-Ala-Phe-Lys-AMC and N-t-Boc-Ala-Pro-Ala-AMC are not significantly hydrolyzed. The chain is Transmembrane protease serine 9 (Tmprss9) from Rattus norvegicus (Rat).